The following is a 570-amino-acid chain: Proline--tRNA ligase (570 aa).

Belongs to the class-II aminoacyl-tRNA synthetase family. ProS type 1 subfamily. Homodimer.

Its subcellular location is the cytoplasm. It carries out the reaction tRNA(Pro) + L-proline + ATP = L-prolyl-tRNA(Pro) + AMP + diphosphate. Catalyzes the attachment of proline to tRNA(Pro) in a two-step reaction: proline is first activated by ATP to form Pro-AMP and then transferred to the acceptor end of tRNA(Pro). As ProRS can inadvertently accommodate and process non-cognate amino acids such as alanine and cysteine, to avoid such errors it has two additional distinct editing activities against alanine. One activity is designated as 'pretransfer' editing and involves the tRNA(Pro)-independent hydrolysis of activated Ala-AMP. The other activity is designated 'posttransfer' editing and involves deacylation of mischarged Ala-tRNA(Pro). The misacylated Cys-tRNA(Pro) is not edited by ProRS. In Thermoanaerobacter pseudethanolicus (strain ATCC 33223 / 39E) (Clostridium thermohydrosulfuricum), this protein is Proline--tRNA ligase.